The sequence spans 749 residues: 5-methyltetrahydropteroyltriglutamate--homocysteine methyltransferase (749 aa).

5-methyltetrahydropteroyltri-L-glutamate contacts are provided by residues 15–18 (RELK) and Lys114. Residues 425 to 427 (IGS) and Glu478 each bind L-homocysteine. Residues 425–427 (IGS) and Glu478 each bind L-methionine. A 5-methyltetrahydropteroyltri-L-glutamate-binding site is contributed by Trp555. Asp593 is a binding site for L-homocysteine. Asp593 is a binding site for L-methionine. Glu599 is a 5-methyltetrahydropteroyltri-L-glutamate binding site. Zn(2+) is bound by residues His636, Cys638, and Glu660. His689 (proton donor) is an active-site residue. Zn(2+) is bound at residue Cys721.

The protein belongs to the vitamin-B12 independent methionine synthase family. Zn(2+) is required as a cofactor.

It catalyses the reaction 5-methyltetrahydropteroyltri-L-glutamate + L-homocysteine = tetrahydropteroyltri-L-glutamate + L-methionine. It participates in amino-acid biosynthesis; L-methionine biosynthesis via de novo pathway; L-methionine from L-homocysteine (MetE route): step 1/1. Its function is as follows. Catalyzes the transfer of a methyl group from 5-methyltetrahydrofolate to homocysteine resulting in methionine formation. The polypeptide is 5-methyltetrahydropteroyltriglutamate--homocysteine methyltransferase (Streptococcus suis (strain 05ZYH33)).